We begin with the raw amino-acid sequence, 122 residues long: Holo-[acyl-carrier-protein] synthase (122 aa).

Mg(2+)-binding residues include Asp8 and Glu55.

It belongs to the P-Pant transferase superfamily. AcpS family. It depends on Mg(2+) as a cofactor.

The protein localises to the cytoplasm. The catalysed reaction is apo-[ACP] + CoA = holo-[ACP] + adenosine 3',5'-bisphosphate + H(+). In terms of biological role, transfers the 4'-phosphopantetheine moiety from coenzyme A to a Ser of acyl-carrier-protein. In Fusobacterium nucleatum subsp. nucleatum (strain ATCC 25586 / DSM 15643 / BCRC 10681 / CIP 101130 / JCM 8532 / KCTC 2640 / LMG 13131 / VPI 4355), this protein is Holo-[acyl-carrier-protein] synthase.